The following is an 82-amino-acid chain: Large ribosomal subunit protein bL31B (82 aa).

Belongs to the bacterial ribosomal protein bL31 family. Type B subfamily. Part of the 50S ribosomal subunit after the end of exponential growth.

While neither of the L31 paralogs is essential, this protein does not seem to function as the main L31 protein. Has a higher affinity for 70S ribosomes than the zinc-containing L31 paralog; is able to displace it to varying extents, even under zinc-replete conditions. The polypeptide is Large ribosomal subunit protein bL31B (rpmE2) (Bacillus subtilis (strain 168)).